The following is a 680-amino-acid chain: DNA ligase (680 aa).

Residues Asp38–Asp42, Ser87–Leu88, and Glu119 each bind NAD(+). Residue Lys121 is the N6-AMP-lysine intermediate of the active site. Residues Arg142, Glu179, Lys296, and Lys320 each contribute to the NAD(+) site. 4 residues coordinate Zn(2+): Cys414, Cys417, Cys432, and Cys438. In terms of domain architecture, BRCT spans Ile597–Glu680.

The protein belongs to the NAD-dependent DNA ligase family. LigA subfamily. It depends on Mg(2+) as a cofactor. Requires Mn(2+) as cofactor.

It carries out the reaction NAD(+) + (deoxyribonucleotide)n-3'-hydroxyl + 5'-phospho-(deoxyribonucleotide)m = (deoxyribonucleotide)n+m + AMP + beta-nicotinamide D-nucleotide.. In terms of biological role, DNA ligase that catalyzes the formation of phosphodiester linkages between 5'-phosphoryl and 3'-hydroxyl groups in double-stranded DNA using NAD as a coenzyme and as the energy source for the reaction. It is essential for DNA replication and repair of damaged DNA. This Cellvibrio japonicus (strain Ueda107) (Pseudomonas fluorescens subsp. cellulosa) protein is DNA ligase.